The chain runs to 238 residues: Opacity protein opA66 (238 aa).

A signal peptide is located at residue Ala-1. Disordered stretches follow at residues 88–109 (NLQR…QENG) and 162–183 (GARG…AHQE). Over residues 168 to 183 (PTVSSPYKNTQDAHQE) the composition is skewed to polar residues.

The protein belongs to the opacity porin family.

It localises to the cell outer membrane. Implicated in a number of adherence functions. OPA proteins are implicated in pathogenesis and are subject to phase variation. This is Opacity protein opA66 from Neisseria gonorrhoeae.